Here is a 206-residue protein sequence, read N- to C-terminus: Pyridoxine/pyridoxamine 5'-phosphate oxidase (206 aa).

Residues 53-58 (RMVLLK), 68-69 (YT), lysine 75, and glutamine 97 contribute to the FMN site. Lysine 58 is a substrate binding site. The substrate site is built by tyrosine 115, arginine 119, and serine 123. Residues 132-133 (QS) and tryptophan 177 contribute to the FMN site. A substrate-binding site is contributed by 183 to 185 (RLH). Arginine 187 lines the FMN pocket.

The protein belongs to the pyridoxamine 5'-phosphate oxidase family. Homodimer. It depends on FMN as a cofactor.

It catalyses the reaction pyridoxamine 5'-phosphate + O2 + H2O = pyridoxal 5'-phosphate + H2O2 + NH4(+). The catalysed reaction is pyridoxine 5'-phosphate + O2 = pyridoxal 5'-phosphate + H2O2. The protein operates within cofactor metabolism; pyridoxal 5'-phosphate salvage; pyridoxal 5'-phosphate from pyridoxamine 5'-phosphate: step 1/1. It functions in the pathway cofactor metabolism; pyridoxal 5'-phosphate salvage; pyridoxal 5'-phosphate from pyridoxine 5'-phosphate: step 1/1. Its function is as follows. Catalyzes the oxidation of either pyridoxine 5'-phosphate (PNP) or pyridoxamine 5'-phosphate (PMP) into pyridoxal 5'-phosphate (PLP). In Rhizobium meliloti (strain 1021) (Ensifer meliloti), this protein is Pyridoxine/pyridoxamine 5'-phosphate oxidase.